A 125-amino-acid chain; its full sequence is Large ribosomal subunit protein eL31 (125 aa).

The residue at position 1 (methionine 1) is an N-acetylmethionine. Serine 15 is modified (phosphoserine). An N6-succinyllysine mark is found at lysine 55 and lysine 70. Lysine 75 is modified (N6-acetyllysine; alternate). Lysine 75 bears the N6-succinyllysine; alternate mark. Serine 98 carries the phosphoserine modification.

It belongs to the eukaryotic ribosomal protein eL31 family. As to quaternary structure, component of the large ribosomal subunit.

It is found in the cytoplasm. In terms of biological role, component of the large ribosomal subunit. The ribosome is a large ribonucleoprotein complex responsible for the synthesis of proteins in the cell. This Oryctolagus cuniculus (Rabbit) protein is Large ribosomal subunit protein eL31 (RPL31).